The primary structure comprises 250 residues: 5'-nucleotidase SurE (250 aa).

4 residues coordinate a divalent metal cation: aspartate 8, aspartate 9, serine 40, and asparagine 92.

Belongs to the SurE nucleotidase family. A divalent metal cation serves as cofactor.

It is found in the cytoplasm. The catalysed reaction is a ribonucleoside 5'-phosphate + H2O = a ribonucleoside + phosphate. Functionally, nucleotidase that shows phosphatase activity on nucleoside 5'-monophosphates. This Dichelobacter nodosus (strain VCS1703A) protein is 5'-nucleotidase SurE.